A 55-amino-acid chain; its full sequence is Large ribosomal subunit protein bL33 (55 aa).

The protein belongs to the bacterial ribosomal protein bL33 family.

The protein is Large ribosomal subunit protein bL33 of Clavibacter sepedonicus (Clavibacter michiganensis subsp. sepedonicus).